Here is a 130-residue protein sequence, read N- to C-terminus: Small ribosomal subunit protein uS11 (130 aa).

Belongs to the universal ribosomal protein uS11 family. Part of the 30S ribosomal subunit. Interacts with proteins S7 and S18. Binds to IF-3.

Located on the platform of the 30S subunit, it bridges several disparate RNA helices of the 16S rRNA. Forms part of the Shine-Dalgarno cleft in the 70S ribosome. The chain is Small ribosomal subunit protein uS11 from Buchnera aphidicola subsp. Cinara cedri (strain Cc).